The chain runs to 218 residues: Glutathione S-transferase Mu 2 (218 aa).

The GST N-terminal domain occupies 2 to 88; sequence PMTLGYWDIR…YLARKHNLCG (87 aa). 7 to 8 is a binding site for glutathione; that stretch reads YW. S27 and S44 each carry phosphoserine. Glutathione is bound by residues 43–46, K50, 59–60, and 72–73; these read RSQW, NL, and QS. The GST C-terminal domain maps to 90-208; sequence TEEERIRVDI…KSSRFLSKPI (119 aa). Y116 is a substrate binding site. Phosphoserine is present on S117.

It belongs to the GST superfamily. Mu family. As to quaternary structure, homodimer.

It is found in the cytoplasm. It carries out the reaction RX + glutathione = an S-substituted glutathione + a halide anion + H(+). It catalyses the reaction 11(S)-hydroxy-14(S),15(S)-epoxy-(5Z,8Z,12E)-eicosatrienoate + glutathione = (11S,15S)-dihydroxy-14(R)-S-glutathionyl-(5Z,8Z,12E)-eicosatrienoate. In terms of biological role, conjugation of reduced glutathione to a wide number of exogenous and endogenous hydrophobic electrophiles. Participates in the formation of novel hepoxilin regioisomers. This is Glutathione S-transferase Mu 2 from Mus musculus (Mouse).